Here is a 240-residue protein sequence, read N- to C-terminus: MVLKCLECDKLLSSIEMAEFHSTKTSHDQFEETEEEIKKRSPEELKQAIEALREKAKEKKEKERILALEEKKTNYKILQKSNDETAQAMRKMQDQARLRDLQKIRQQKAEDAEQRKKILAEIERDKKRRAAERENKNSSVKETAAPIKQPKNANSSSTCTRTPPTSGRFSIRHDGQVCNITIAAEETLRQLAQQVAEKMNVSPPTKFTTTFPRASYGTDVFDKPVNQLDLFPSAVLIPQW.

A C2H2-type zinc finger spans residues L3–H27. Disordered regions lie at residues H21–E43 and A120–I171. The segment covering A120–K136 has biased composition (basic and acidic residues). Over residues S155 to S166 the composition is skewed to low complexity.

This is an uncharacterized protein from Schizosaccharomyces pombe (strain 972 / ATCC 24843) (Fission yeast).